A 467-amino-acid polypeptide reads, in one-letter code: Ribulose bisphosphate carboxylase large chain (467 aa).

The propeptide occupies 1–2 (MS). An N-acetylproline modification is found at P3. Residue K14 is modified to N6,N6,N6-trimethyllysine. The substrate site is built by N123 and T173. K175 serves as the catalytic Proton acceptor. Residue K177 coordinates substrate. K201, D203, and E204 together coordinate Mg(2+). K201 carries the post-translational modification N6-carboxylysine. H294 serves as the catalytic Proton acceptor. Substrate contacts are provided by R295, H327, and S379.

The protein belongs to the RuBisCO large chain family. Type I subfamily. As to quaternary structure, heterohexadecamer of 8 large chains and 8 small chains; disulfide-linked. The disulfide link is formed within the large subunit homodimers. The cofactor is Mg(2+). Post-translationally, the disulfide bond which can form in the large chain dimeric partners within the hexadecamer appears to be associated with oxidative stress and protein turnover.

The protein resides in the plastid. Its subcellular location is the chloroplast. The catalysed reaction is 2 (2R)-3-phosphoglycerate + 2 H(+) = D-ribulose 1,5-bisphosphate + CO2 + H2O. The enzyme catalyses D-ribulose 1,5-bisphosphate + O2 = 2-phosphoglycolate + (2R)-3-phosphoglycerate + 2 H(+). In terms of biological role, ruBisCO catalyzes two reactions: the carboxylation of D-ribulose 1,5-bisphosphate, the primary event in carbon dioxide fixation, as well as the oxidative fragmentation of the pentose substrate in the photorespiration process. Both reactions occur simultaneously and in competition at the same active site. This chain is Ribulose bisphosphate carboxylase large chain, found in Calamus usitatus (Palm tree).